Here is a 153-residue protein sequence, read N- to C-terminus: Endoribonuclease YbeY (153 aa).

Residues His-118, His-122, and His-128 each coordinate Zn(2+).

It belongs to the endoribonuclease YbeY family. The cofactor is Zn(2+).

The protein resides in the cytoplasm. Its function is as follows. Single strand-specific metallo-endoribonuclease involved in late-stage 70S ribosome quality control and in maturation of the 3' terminus of the 16S rRNA. The chain is Endoribonuclease YbeY from Pelagibacter ubique (strain HTCC1062).